An 85-amino-acid chain; its full sequence is Hepcidin (85 aa).

Residues 1-24 (MKTFSVAVAVAVVLAFICLQESSA) form the signal peptide. Residues 25–64 (VPANEEQELEQQIYFADPEMPVESCKMPYYMRENRQGSPA) constitute a propeptide that is removed on maturation. 4 disulfide bridges follow: C66-C83, C69-C72, C70-C79, and C73-C82.

As to quaternary structure, monomer. As to expression, expressed in all tissues tested, with highest levels of expression in kidney and lowest levels in liver. Intra-peritoneal injection of lipopolysaccharide results in increased expression in heart, spleen and stomach, but not in kidney or liver.

The protein localises to the secreted. Seems to act as a signaling molecule involved in the maintenance of iron homeostasis. Seems to be required in conjunction with HFE to regulate both intestinal iron absorption and iron storage in macrophages. Functionally, has very strong antibacterial activity against the marine Gram-negative bacteria V.alginolyticus (MIC=24 uM), V.fluvialis, V.harveyis (MIC=12 uM) and V.parahaemolyticus (MIC=6 uM). Has antibacterial activity against the Gram-negative bacteria A.hydrophila (MIC=6 uM), E.coli (MIC=24 uM), and E.coli BL21(DE3)plysS (MIC=6 uM), and the Gram-positive bacteria B.cereus (MIC=24 uM), B.subtilis (MIC=6 uM), C.glutamicum (MIC=3 uM), M.luteus (MIC=3 uM), M.lysodeikticus, S.aureus (MIC=6 uM) and S.epidermis (MIC=12 uM). Possesses antifungal activity against A.niger (MIC=24 uM), F.graminearum (MIC24 uM) and F.solani (MIC=24 uM), but lacks antifungal activity against the yeasts P.pastoris GS115 and C.albicans. The protein is Hepcidin of Larimichthys crocea (Large yellow croaker).